A 359-amino-acid chain; its full sequence is NADH-quinone oxidoreductase subunit H (359 aa).

A run of 8 helical transmembrane segments spans residues 16–36, 94–114, 128–148, 167–187, 205–225, 261–281, 296–316, and 331–351; these read IWPA…AVLA, GLFI…WAVI, GLLF…IAGW, VSYE…SGSL, GLTF…VYFI, FFLA…LLFL, IPGW…FLWV, and LGWK…GAWM.

This sequence belongs to the complex I subunit 1 family. As to quaternary structure, NDH-1 is composed of 14 different subunits. Subunits NuoA, H, J, K, L, M, N constitute the membrane sector of the complex.

Its subcellular location is the cell inner membrane. It carries out the reaction a quinone + NADH + 5 H(+)(in) = a quinol + NAD(+) + 4 H(+)(out). Functionally, NDH-1 shuttles electrons from NADH, via FMN and iron-sulfur (Fe-S) centers, to quinones in the respiratory chain. The immediate electron acceptor for the enzyme in this species is believed to be ubiquinone. Couples the redox reaction to proton translocation (for every two electrons transferred, four hydrogen ions are translocated across the cytoplasmic membrane), and thus conserves the redox energy in a proton gradient. This subunit may bind ubiquinone. The chain is NADH-quinone oxidoreductase subunit H from Polaromonas naphthalenivorans (strain CJ2).